The chain runs to 637 residues: Penicillin-binding protein 1A (637 aa).

The interval 62–224 (LIADLGSERR…NQYDPYSHPE (163 aa)) is transglycosylase. E91 serves as the catalytic Proton donor; for transglycosylase activity. A transpeptidase region spans residues 298 to 612 (EVYTNVDSKV…RLTPIVGDGF (315 aa)). Catalysis depends on S371, which acts as the Acyl-ester intermediate; for transpeptidase activity.

The protein in the N-terminal section; belongs to the glycosyltransferase 51 family. This sequence in the C-terminal section; belongs to the transpeptidase family.

The protein resides in the secreted. The enzyme catalyses [GlcNAc-(1-&gt;4)-Mur2Ac(oyl-L-Ala-gamma-D-Glu-L-Lys-D-Ala-D-Ala)](n)-di-trans,octa-cis-undecaprenyl diphosphate + beta-D-GlcNAc-(1-&gt;4)-Mur2Ac(oyl-L-Ala-gamma-D-Glu-L-Lys-D-Ala-D-Ala)-di-trans,octa-cis-undecaprenyl diphosphate = [GlcNAc-(1-&gt;4)-Mur2Ac(oyl-L-Ala-gamma-D-Glu-L-Lys-D-Ala-D-Ala)](n+1)-di-trans,octa-cis-undecaprenyl diphosphate + di-trans,octa-cis-undecaprenyl diphosphate + H(+). It carries out the reaction Preferential cleavage: (Ac)2-L-Lys-D-Ala-|-D-Ala. Also transpeptidation of peptidyl-alanyl moieties that are N-acyl substituents of D-alanine.. It functions in the pathway cell wall biogenesis; peptidoglycan biosynthesis. In terms of biological role, cell wall formation. In Streptococcus oralis, this protein is Penicillin-binding protein 1A (ponA).